The chain runs to 398 residues: Cytochrome b (398 aa).

4 helical membrane-spanning segments follow: residues 33–53 (FGSLLGLCLVAQIITGLFLAM), 77–98 (WLIRNLHANGASFFFICVYLHI), 113–133 (WNIGVILLLLVMMTAFVGYVL), and 178–198 (FFAFHFLFPFLIAAFTIIHLL). His-83 and His-97 together coordinate heme b. Heme b is bound by residues His-182 and His-196. His-201 contacts a ubiquinone. 4 helical membrane-spanning segments follow: residues 226 to 246 (YKDLLGFAILLIALISLSLFA), 288 to 308 (LGGVLALLASILILMLVPILH), 320 to 340 (FTQLLFWLLVADVIILTWIGG), and 347 to 367 (YVVIGQIASFLYFFLFLFLIP).

Belongs to the cytochrome b family. As to quaternary structure, the cytochrome bc1 complex contains 3 respiratory subunits (MT-CYB, CYC1 and UQCRFS1), 2 core proteins (UQCRC1 and UQCRC2) and probably 6 low-molecular weight proteins. The cofactor is heme b.

Its subcellular location is the mitochondrion inner membrane. Its function is as follows. Component of the ubiquinol-cytochrome c reductase complex (complex III or cytochrome b-c1 complex) that is part of the mitochondrial respiratory chain. The b-c1 complex mediates electron transfer from ubiquinol to cytochrome c. Contributes to the generation of a proton gradient across the mitochondrial membrane that is then used for ATP synthesis. This Channa asiatica (Small snakehead) protein is Cytochrome b (mt-cyb).